The following is a 67-amino-acid chain: Large ribosomal subunit protein uL29 (67 aa).

The protein belongs to the universal ribosomal protein uL29 family.

This Exiguobacterium sp. (strain ATCC BAA-1283 / AT1b) protein is Large ribosomal subunit protein uL29.